We begin with the raw amino-acid sequence, 226 residues long: 2,3-bisphosphoglycerate-dependent phosphoglycerate mutase (226 aa).

Residues 8–15 (RHGQSVWN), 21–22 (TG), arginine 58, 109–112 (ERMY), lysine 120, 136–137 (RR), and 180–181 (GN) contribute to the substrate site. Residue histidine 9 is the Tele-phosphohistidine intermediate of the active site. Glutamate 109 acts as the Proton donor/acceptor in catalysis.

Belongs to the phosphoglycerate mutase family. BPG-dependent PGAM subfamily.

The enzyme catalyses (2R)-2-phosphoglycerate = (2R)-3-phosphoglycerate. It functions in the pathway carbohydrate degradation; glycolysis; pyruvate from D-glyceraldehyde 3-phosphate: step 3/5. Functionally, catalyzes the interconversion of 2-phosphoglycerate and 3-phosphoglycerate. This Chlamydia trachomatis serovar L2 (strain ATCC VR-902B / DSM 19102 / 434/Bu) protein is 2,3-bisphosphoglycerate-dependent phosphoglycerate mutase.